The sequence spans 570 residues: Proline--tRNA ligase (570 aa).

Belongs to the class-II aminoacyl-tRNA synthetase family. ProS type 1 subfamily. As to quaternary structure, homodimer.

It localises to the cytoplasm. It carries out the reaction tRNA(Pro) + L-proline + ATP = L-prolyl-tRNA(Pro) + AMP + diphosphate. Catalyzes the attachment of proline to tRNA(Pro) in a two-step reaction: proline is first activated by ATP to form Pro-AMP and then transferred to the acceptor end of tRNA(Pro). As ProRS can inadvertently accommodate and process non-cognate amino acids such as alanine and cysteine, to avoid such errors it has two additional distinct editing activities against alanine. One activity is designated as 'pretransfer' editing and involves the tRNA(Pro)-independent hydrolysis of activated Ala-AMP. The other activity is designated 'posttransfer' editing and involves deacylation of mischarged Ala-tRNA(Pro). The misacylated Cys-tRNA(Pro) is not edited by ProRS. This Shewanella sp. (strain ANA-3) protein is Proline--tRNA ligase.